The following is a 206-amino-acid chain: MLQEVVYCGICSYPPEYCEFSGKLKRCKVWLSENDTELYAKLYGNEIDEEVANAANKLGSSSIGEAREEKLEKDLLRLQAKQENREQRELAKKLSSKVVIKREARTKRKFIVAISGLEVFEIDMKKLAKTFASKFATGCSVSKNAEKKDEIVIQGDVLEEVEKYIHSLLEEKGLKNVKLEIIDSQKKKKKPTDEANSNNNNNNNNK.

The SUI1 domain maps to 98 to 169 (VVIKREARTK…EVEKYIHSLL (72 aa)). The tract at residues 184 to 206 (SQKKKKKPTDEANSNNNNNNNNK) is disordered. Positions 196-206 (NSNNNNNNNNK) are enriched in low complexity.

It belongs to the DENR family. As to quaternary structure, interacts with the 40S ribosomal subunit.

It is found in the cytoplasm. This chain is Translation machinery-associated protein 22 (TMA22), found in Vanderwaltozyma polyspora (strain ATCC 22028 / DSM 70294 / BCRC 21397 / CBS 2163 / NBRC 10782 / NRRL Y-8283 / UCD 57-17) (Kluyveromyces polysporus).